The primary structure comprises 411 residues: Ornithine cyclodeaminase (411 aa).

10 residues coordinate NAD(+): Asn-236, Ala-237, Asp-315, Thr-347, Met-348, Leu-349, His-350, Asp-368, Asp-391, and Val-392.

It belongs to the AgrE/ArgZ ornithine cyclodeaminase family. Requires NAD(+) as cofactor.

It catalyses the reaction L-ornithine = L-proline + NH4(+). Functionally, catalyzes the conversion of ornithine to proline, with the release of ammonia. The protein is Ornithine cyclodeaminase of Methanothermobacter thermautotrophicus (strain ATCC 29096 / DSM 1053 / JCM 10044 / NBRC 100330 / Delta H) (Methanobacterium thermoautotrophicum).